The sequence spans 677 residues: L-type lectin-domain containing receptor kinase IV.2 (677 aa).

The first 22 residues, Met1 to Ser22, serve as a signal peptide directing secretion. Residues Gln23–Lys291 are Extracellular-facing. The segment at Asn24 to Arg262 is legume-lectin like. N-linked (GlcNAc...) asparagine glycosylation is found at Asn26, Asn57, Asn81, Asn128, Asn134, Asn171, Asn186, and Asn203. A helical membrane pass occupies residues Ile292–Ile312. Residues Val313–Arg677 are Cytoplasmic-facing. In terms of domain architecture, Protein kinase spans Phe347–Leu625. ATP-binding positions include Leu353–Val361 and Lys376. Catalysis depends on Asp472, which acts as the Proton acceptor.

This sequence in the C-terminal section; belongs to the protein kinase superfamily. Ser/Thr protein kinase family. The protein in the N-terminal section; belongs to the leguminous lectin family.

Its subcellular location is the cell membrane. The enzyme catalyses L-seryl-[protein] + ATP = O-phospho-L-seryl-[protein] + ADP + H(+). The catalysed reaction is L-threonyl-[protein] + ATP = O-phospho-L-threonyl-[protein] + ADP + H(+). Required during pollen development. Its function is as follows. Involved in resistance response to the pathogenic bacteria Pseudomonas syringae. This is L-type lectin-domain containing receptor kinase IV.2 from Arabidopsis thaliana (Mouse-ear cress).